A 325-amino-acid polypeptide reads, in one-letter code: DNA-directed RNA polymerase subunit alpha (325 aa).

The alpha N-terminal domain (alpha-NTD) stretch occupies residues 1–231; that stretch reads MQTSLLKPKI…DQLSVFAALE (231 aa). The alpha C-terminal domain (alpha-CTD) stretch occupies residues 246-325; the sequence is IDPILLRPVD…ENWPPAGLDK (80 aa).

The protein belongs to the RNA polymerase alpha chain family. As to quaternary structure, homodimer. The RNAP catalytic core consists of 2 alpha, 1 beta, 1 beta' and 1 omega subunit. When a sigma factor is associated with the core the holoenzyme is formed, which can initiate transcription.

It carries out the reaction RNA(n) + a ribonucleoside 5'-triphosphate = RNA(n+1) + diphosphate. In terms of biological role, DNA-dependent RNA polymerase catalyzes the transcription of DNA into RNA using the four ribonucleoside triphosphates as substrates. The protein is DNA-directed RNA polymerase subunit alpha of Burkholderia mallei (strain NCTC 10247).